The sequence spans 573 residues: Solute carrier family 41 member 2 (573 aa).

Over 1 to 162 the chain is Extracellular; that stretch reads MTNSKGRSIT…KESSGIMALQ (162 aa). Serine 136 and serine 137 each carry phosphoserine. The helical transmembrane segment at 163–183 threads the bilayer; sequence ILVPFLLAGFGTVSAGMVLDI. Residues 184–195 lie on the Cytoplasmic side of the membrane; it reads VQHWEVFRKVTE. The chain crosses the membrane as a helical span at residues 196–216; sequence VFILVPALLGLKGNLEMTLAS. The Extracellular segment spans residues 217 to 245; that stretch reads RLSTAVNIGKMDSPIEKWNLIIGNLALKQ. Residues 246–266 form a helical membrane-spanning segment; the sequence is VQATVVGFLAAVAAIILGWIP. The Cytoplasmic segment spans residues 267 to 282; the sequence is EGKYYLDHSILLCSSS. A helical transmembrane segment spans residues 283-303; that stretch reads VATAFIASLLQGIIMVGVIVG. The Extracellular portion of the chain corresponds to 304–313; it reads SKKTGINPDN. A helical membrane pass occupies residues 314-334; that stretch reads VATPIAASFGDLITLAILAWI. The Cytoplasmic portion of the chain corresponds to 335 to 347; sequence SQGLYSCLETYYY. Residues 348–368 traverse the membrane as a helical segment; the sequence is ISPLVGVFFLALTPIWIIIAA. Over 369–376 the chain is Extracellular; that stretch reads KHPATRTV. The chain crosses the membrane as a helical span at residues 377 to 397; that stretch reads LHSGWEPVITAMVISSIGGLI. Residues 398-406 lie on the Cytoplasmic side of the membrane; the sequence is LDTTVSDPN. Residues 407–427 form a helical membrane-spanning segment; sequence LVGIVVYTPVINGIGGNLVAI. Residues 428–469 lie on the Extracellular side of the membrane; it reads QASRISTYLHLHSIPGELPDEPKGCYYPFRTFFGPGVNNKSA. Residues 470–490 traverse the membrane as a helical segment; the sequence is QVLLLLVIPGHLIFLYTIHLM. Residues 491–498 lie on the Cytoplasmic side of the membrane; that stretch reads KSGHTSLT. A helical transmembrane segment spans residues 499–519; the sequence is IIFIVVYLFGAVLQVFTLLWI. Topologically, residues 520–543 are extracellular; the sequence is ADWMVHHFWRKGKDPDSFSIPYLT. A helical transmembrane segment spans residues 544–564; sequence ALGDLLGTALLALSFHFLWLI. Residues 565–573 are Cytoplasmic-facing; that stretch reads GDRDGDVGD.

It belongs to the SLC41A transporter family.

It localises to the cell membrane. The enzyme catalyses Mg(2+)(in) = Mg(2+)(out). It catalyses the reaction Mn(2+)(in) = Mn(2+)(out). The catalysed reaction is Co(2+)(in) = Co(2+)(out). It carries out the reaction Ni(2+)(in) = Ni(2+)(out). The enzyme catalyses Fe(2+)(in) = Fe(2+)(out). In terms of biological role, acts as a plasma-membrane magnesium transporter. Can also mediate the transport of other divalent metal cations in an order of Ba(2+) &gt; Ni(2+) &gt; Co(2+) &gt; Fe(2+) &gt; Mn(2+). The sequence is that of Solute carrier family 41 member 2 (SLC41A2) from Homo sapiens (Human).